Consider the following 189-residue polypeptide: MALPFALLMALVVLSCKSSCSLDCDLPQTHSLGHRRTMMLLAQMRRISLFSCLKDRHDFRFPQEEFDGNQFQKAEAISVLHEVIQQTFNLFSTKDSSVAWDERLLDKLYTELYQQLNDLEACVMQEVWVGGTPLMNEDSILAVRKYFQRITLYLTEKKYSPCAWEVVRAEIMRSFSSSRNLQERLRRKE.

An N-terminal signal peptide occupies residues 1–20 (MALPFALLMALVVLSCKSSC). Intrachain disulfides connect C24–C122 and C52–C162.

This sequence belongs to the alpha/beta interferon family.

It is found in the secreted. Produced by macrophages, IFN-alpha have antiviral activities. Interferon stimulates the production of two enzymes: a protein kinase and an oligoadenylate synthetase. The chain is Interferon alpha-6 (IFNA6) from Homo sapiens (Human).